The primary structure comprises 486 residues: L-arabinose isomerase (486 aa).

Mn(2+) contacts are provided by Glu299, Glu324, His341, and His440.

Belongs to the arabinose isomerase family. It depends on Mn(2+) as a cofactor.

It catalyses the reaction beta-L-arabinopyranose = L-ribulose. Its pathway is carbohydrate degradation; L-arabinose degradation via L-ribulose; D-xylulose 5-phosphate from L-arabinose (bacterial route): step 1/3. Catalyzes the conversion of L-arabinose to L-ribulose. This chain is L-arabinose isomerase, found in Shouchella clausii (strain KSM-K16) (Alkalihalobacillus clausii).